The chain runs to 107 residues: Thiosulfate sulfurtransferase GlpE (107 aa).

Residues 19–107 (QDLNAVLVDI…WHKAGLPVEK (89 aa)) enclose the Rhodanese domain. Residue Cys-67 is the Cysteine persulfide intermediate of the active site.

This sequence belongs to the GlpE family.

It is found in the cytoplasm. It catalyses the reaction thiosulfate + hydrogen cyanide = thiocyanate + sulfite + 2 H(+). It carries out the reaction thiosulfate + [thioredoxin]-dithiol = [thioredoxin]-disulfide + hydrogen sulfide + sulfite + 2 H(+). Its function is as follows. Transferase that catalyzes the transfer of sulfur from thiosulfate to thiophilic acceptors such as cyanide or dithiols. May function in a CysM-independent thiosulfate assimilation pathway by catalyzing the conversion of thiosulfate to sulfite, which can then be used for L-cysteine biosynthesis. This Aliivibrio fischeri (strain MJ11) (Vibrio fischeri) protein is Thiosulfate sulfurtransferase GlpE.